The sequence spans 219 residues: Translation initiation factor IF-3 (219 aa).

Belongs to the IF-3 family. In terms of assembly, monomer.

Its subcellular location is the cytoplasm. IF-3 binds to the 30S ribosomal subunit and shifts the equilibrium between 70S ribosomes and their 50S and 30S subunits in favor of the free subunits, thus enhancing the availability of 30S subunits on which protein synthesis initiation begins. The protein is Translation initiation factor IF-3 of Prochlorococcus marinus (strain MIT 9303).